The following is a 348-amino-acid chain: ELAV-like protein 3 (348 aa).

RRM domains are found at residues 34–112 (TNLI…YARP), 120–200 (ANLY…FANN), and 265–343 (WCIF…FKTS).

The protein belongs to the RRM elav family. As to expression, expression is neural-specific in both embryos and adults. Expressed from neurula stage onwards in primary motor-, inter- and sensory-neurons. Expressed in the closing neural tube and motor neurons of stage 18 embryos, and primarily in the ventricular zone and dorsal region of the tailbud and adult brain. Expressed from stage 26 onwards in the differentiating ganglion cell layer of the retina, extending to the inner nuclear layer at later stages.

Its function is as follows. RNA-binding protein that binds to AU-rich element (ARE) sequences of target mRNAs. May also bind poly-A tracts via RRM 3. May be involved in neuronal differentiation and maintenance. This Xenopus laevis (African clawed frog) protein is ELAV-like protein 3 (elavl3).